A 244-amino-acid chain; its full sequence is Cell division protein ZapD (244 aa).

The protein belongs to the ZapD family. In terms of assembly, interacts with FtsZ.

The protein localises to the cytoplasm. Cell division factor that enhances FtsZ-ring assembly. Directly interacts with FtsZ and promotes bundling of FtsZ protofilaments, with a reduction in FtsZ GTPase activity. This is Cell division protein ZapD from Shewanella oneidensis (strain ATCC 700550 / JCM 31522 / CIP 106686 / LMG 19005 / NCIMB 14063 / MR-1).